We begin with the raw amino-acid sequence, 245 residues long: 1-(5-phosphoribosyl)-5-[(5-phosphoribosylamino)methylideneamino] imidazole-4-carboxamide isomerase (245 aa).

Residue aspartate 7 is the Proton acceptor of the active site. Aspartate 129 serves as the catalytic Proton donor.

It belongs to the HisA/HisF family.

It is found in the cytoplasm. The catalysed reaction is 1-(5-phospho-beta-D-ribosyl)-5-[(5-phospho-beta-D-ribosylamino)methylideneamino]imidazole-4-carboxamide = 5-[(5-phospho-1-deoxy-D-ribulos-1-ylimino)methylamino]-1-(5-phospho-beta-D-ribosyl)imidazole-4-carboxamide. The protein operates within amino-acid biosynthesis; L-histidine biosynthesis; L-histidine from 5-phospho-alpha-D-ribose 1-diphosphate: step 4/9. The polypeptide is 1-(5-phosphoribosyl)-5-[(5-phosphoribosylamino)methylideneamino] imidazole-4-carboxamide isomerase (Escherichia coli O17:K52:H18 (strain UMN026 / ExPEC)).